Reading from the N-terminus, the 418-residue chain is Translation initiation factor 2 subunit gamma (418 aa).

Residues 7-206 (QPEVNIGVVG…GIQKYIPTPQ (200 aa)) enclose the tr-type G domain. A G1 region spans residues 16 to 23 (GHVDHGKT). The Mg(2+) site is built by Asp-19, Thr-23, Gly-44, and Thr-46. A GTP-binding site is contributed by 19 to 24 (DHGKTT). The segment at 44–48 (GMTIK) is G2. Residues Cys-59, Cys-62, Cys-74, and Cys-77 each contribute to the Zn(2+) site. Residues 93–96 (DAPG) form a G3 region. GTP-binding positions include 149 to 152 (NKVD) and 184 to 186 (SAL). A G4 region spans residues 149–152 (NKVD). The tract at residues 184-186 (SAL) is G5.

This sequence belongs to the TRAFAC class translation factor GTPase superfamily. Classic translation factor GTPase family. EIF2G subfamily. Heterotrimer composed of an alpha, a beta and a gamma chain. It depends on Mg(2+) as a cofactor.

The catalysed reaction is GTP + H2O = GDP + phosphate + H(+). Its function is as follows. eIF-2 functions in the early steps of protein synthesis by forming a ternary complex with GTP and initiator tRNA. This chain is Translation initiation factor 2 subunit gamma, found in Sulfurisphaera tokodaii (strain DSM 16993 / JCM 10545 / NBRC 100140 / 7) (Sulfolobus tokodaii).